The chain runs to 130 residues: Protein ApaG (130 aa).

Residues 3–127 form the ApaG domain; sequence RAVTRQIEVL…FSLDSPDIRR (125 aa).

This chain is Protein ApaG, found in Afipia carboxidovorans (strain ATCC 49405 / DSM 1227 / KCTC 32145 / OM5) (Oligotropha carboxidovorans).